Here is a 201-residue protein sequence, read N- to C-terminus: NAD(P)H dehydrogenase (quinone) (201 aa).

One can recognise a Flavodoxin-like domain in the interval 4 to 191; sequence VLVLYYSMYG…KIAKCQGVHV (188 aa). Residues 10-15 and 79-81 each bind FMN; these read SMYGHV and TRF. Residue Tyr-12 participates in NAD(+) binding. Trp-99 is a substrate binding site. FMN is bound by residues 114-120 and His-135; that span reads STGTQHG.

The protein belongs to the WrbA family. The cofactor is FMN.

It carries out the reaction a quinone + NADH + H(+) = a quinol + NAD(+). The enzyme catalyses a quinone + NADPH + H(+) = a quinol + NADP(+). In Hydrogenovibrio crunogenus (strain DSM 25203 / XCL-2) (Thiomicrospira crunogena), this protein is NAD(P)H dehydrogenase (quinone).